The following is a 1338-amino-acid chain: Vascular endothelial growth factor receptor 1 (1338 aa).

An N-terminal signal peptide occupies residues Met1–Gly26. At Ser27–Glu758 the chain is on the extracellular side. Ig-like C2-type domains follow at residues Pro32–Ala123, Gly151–His214, Ile230–His327, Thr335–Thr421, Pro428–Thr553, Pro556–Thr654, and Pro661–Thr747. Cystine bridges form between Cys53–Cys107 and Cys158–Cys207. Asn100, Asn164, Asn196, and Asn251 each carry an N-linked (GlcNAc...) asparagine glycan. The cysteines at positions 252 and 311 are disulfide-linked. N-linked (GlcNAc...) asparagine glycans are attached at residues Asn323, Asn402, Asn417, Asn474, Asn547, Asn597, Asn620, Asn625, and Asn666. Cys454 and Cys535 are joined by a disulfide. Cys577 and Cys636 are oxidised to a cystine. Residues Cys682 and Cys731 are joined by a disulfide bond. Residues Leu759–Ile780 traverse the membrane as a helical segment. The Cytoplasmic portion of the chain corresponds to Arg781–Ile1338. The Protein kinase domain occupies Leu827 to Leu1158. ATP contacts are provided by residues Leu833 to Val841 and Lys861. Tyr914 bears the Phosphotyrosine; by autocatalysis mark. Residues Pro940–Leu957 show a composition bias toward basic and acidic residues. The interval Pro940–Glu982 is disordered. Polar residues predominate over residues Ser959 to Phe971. Asp1022 serves as the catalytic Proton acceptor. A phosphotyrosine; by autocatalysis mark is found at Tyr1053, Tyr1169, Tyr1213, Tyr1242, Tyr1309, Tyr1327, and Tyr1333.

Belongs to the protein kinase superfamily. Tyr protein kinase family. CSF-1/PDGF receptor subfamily. As to quaternary structure, interacts with VEGFA, VEGFB and PGF. Monomer in the absence of bound VEGFA, VEGFB or PGF. Homodimer in the presence of bound VEGFA, VEGFB and PGF. Can also form a heterodimer with KDR. Interacts (when tyrosine phosphorylated) with CBL, CRK, GRB2, NCK1, PIK3R1, PLCG, PSEN1 and PTPN11. Probably also interacts with PTPRB. Interacts with RACK1. Identified in a complex with CBL and CD2AP. N-glycosylated. In terms of processing, ubiquitinated after VEGFA-mediated autophosphorylation, leading to proteolytic degradation. Post-translationally, autophosphorylated on tyrosine residues upon ligand binding. Autophosphorylation occurs in trans, i.e. one subunit of the dimeric receptor phosphorylates tyrosine residues on the other subunit. Phosphorylation at Tyr-1169 is important for interaction with PLCG. Phosphorylation at Tyr-1213 is important for interaction with PIK3R1, PTPN11, GRB2, and PLCG. Phosphorylation at Tyr-1333 is important for endocytosis and for interaction with CBL, NCK1 and CRK. Is probably dephosphorylated by PTPRB. In terms of tissue distribution, detected in normal lung, but also in placenta, liver, kidney, heart and brain tissues. Specifically expressed in most of the vascular endothelial cells, and also expressed in peripheral blood monocytes. Isoform 2 is strongly expressed in placenta. Isoform 3 is expressed in corneal epithelial cells (at protein level). Isoform 3 is expressed in vascular smooth muscle cells (VSMC).

It localises to the cell membrane. The protein resides in the endosome. The protein localises to the secreted. It is found in the cytoplasm. It catalyses the reaction L-tyrosyl-[protein] + ATP = O-phospho-L-tyrosyl-[protein] + ADP + H(+). Its activity is regulated as follows. Present in an inactive conformation in the absence of bound ligand. Binding of VEGFA, VEGFB or PGF leads to dimerization and activation by autophosphorylation on tyrosine residues. Tyrosine-protein kinase that acts as a cell-surface receptor for VEGFA, VEGFB and PGF, and plays an essential role in the development of embryonic vasculature, the regulation of angiogenesis, cell survival, cell migration, macrophage function, chemotaxis, and cancer cell invasion. Acts as a positive regulator of postnatal retinal hyaloid vessel regression. May play an essential role as a negative regulator of embryonic angiogenesis by inhibiting excessive proliferation of endothelial cells. Can promote endothelial cell proliferation, survival and angiogenesis in adulthood. Its function in promoting cell proliferation seems to be cell-type specific. Promotes PGF-mediated proliferation of endothelial cells, proliferation of some types of cancer cells, but does not promote proliferation of normal fibroblasts (in vitro). Has very high affinity for VEGFA and relatively low protein kinase activity; may function as a negative regulator of VEGFA signaling by limiting the amount of free VEGFA and preventing its binding to KDR. Modulates KDR signaling by forming heterodimers with KDR. Ligand binding leads to the activation of several signaling cascades. Activation of PLCG leads to the production of the cellular signaling molecules diacylglycerol and inositol 1,4,5-trisphosphate and the activation of protein kinase C. Mediates phosphorylation of PIK3R1, the regulatory subunit of phosphatidylinositol 3-kinase, leading to activation of phosphatidylinositol kinase and the downstream signaling pathway. Mediates activation of MAPK1/ERK2, MAPK3/ERK1 and the MAP kinase signaling pathway, as well as of the AKT1 signaling pathway. Phosphorylates SRC and YES1, and may also phosphorylate CBL. Promotes phosphorylation of AKT1 at 'Ser-473'. Promotes phosphorylation of PTK2/FAK1. Its function is as follows. Phosphorylates PLCG. In terms of biological role, may function as decoy receptor for VEGFA. Functionally, has a truncated kinase domain; it increases phosphorylation of SRC at 'Tyr-418' by unknown means and promotes tumor cell invasion. The sequence is that of Vascular endothelial growth factor receptor 1 (FLT1) from Homo sapiens (Human).